The primary structure comprises 436 residues: GTPase Der (436 aa).

2 consecutive EngA-type G domains span residues 4–167 (PVIA…PKIE) and 176–351 (IRFS…ESHS). GTP-binding positions include 10 to 17 (GRPNVGKS), 57 to 61 (DTGGI), 119 to 122 (NKVD), 182 to 189 (GRPNVGKS), 229 to 233 (DTAGM), and 294 to 297 (NKWD). Positions 352-436 (IRVQTNVLND…PIHIIARARD (85 aa)) constitute a KH-like domain.

Belongs to the TRAFAC class TrmE-Era-EngA-EngB-Septin-like GTPase superfamily. EngA (Der) GTPase family. In terms of assembly, associates with the 50S ribosomal subunit.

Functionally, GTPase that plays an essential role in the late steps of ribosome biogenesis. The protein is GTPase Der of Bacillus mycoides (strain KBAB4) (Bacillus weihenstephanensis).